The following is a 191-amino-acid chain: UPF0312 protein Shewmr7_1249 (191 aa).

Residues 1–22 form the signal peptide; the sequence is MKKQLLAALIGGFLLAPMAASA.

Belongs to the UPF0312 family. Type 1 subfamily.

Its subcellular location is the periplasm. This is UPF0312 protein Shewmr7_1249 from Shewanella sp. (strain MR-7).